We begin with the raw amino-acid sequence, 426 residues long: Potassium channel subfamily K member 2 (426 aa).

The Cytoplasmic portion of the chain corresponds to 1 to 61; the sequence is MLPSASRERP…TTINVMKWKT (61 aa). Important for GNG4 binding and L-glutamate release in astrocytes regions lie at residues 17–38 and 51–61; these read AAPD…LSFS and DTTINVMKWKT. A helical membrane pass occupies residues 62 to 82; it reads VSTIFLVVVLYLIIGATVFKA. N-linked (GlcNAc...) asparagine glycosylation is found at N110 and N134. The segment at residues 144–170 is an intramembrane region (pore-forming); the sequence is LGSSFFFAGTVITTIGFGNISPRTEGG. T157, I158, G159, and F160 together coordinate K(+). A selectivity filter 1 region spans residues 157-162; the sequence is TIGFGN. Residues 172–192 traverse the membrane as a helical segment; the sequence is IFCIIYALLGIPLFGFLLAGV. The Cytoplasmic segment spans residues 193–223; it reads GDQLGTIFGKGIAKVEDTFIKWNVSQTKIRI. A helical transmembrane segment spans residues 224–244; sequence ISTIIFILFGCVLFVALPAII. Positions 253-283 form an intramembrane region, pore-forming; the sequence is ALDAIYFVVITLTTIGFGDYVAGGSDIEYLD. Residues T266, I267, G268, and F269 each contribute to the K(+) site. Positions 266 to 271 are selectivity filter 2; that stretch reads TIGFGD. A helical membrane pass occupies residues 288-308; sequence VVWFWILVGLAYFAAVLSMIG. The Cytoplasmic portion of the chain corresponds to 309–426; sequence DWLRVISKKT…EEIAVIENIK (118 aa). The segment at 313 to 326 is interaction with AKAP5; it reads VISKKTKEEVGEFR. Positions 337–385 are essential for chloroform and halothane sensitivity; sequence TAEFKETRRRLSVEIYDKFQRATSIKRKLSAELAGNHNQELTPCRRTLS. Position 348 is a phosphoserine; by PKA (S348).

This sequence belongs to the two pore domain potassium channel (TC 1.A.1.8) family. Homodimer; disulfide-linked. Forms heterodimers with other 2-pore domain K(+) channel subunits, such as KCNK1, KCNK4, KCNK10 and KCNK18. Interacts with AKAP5; the channel is recruited to postsynaptic microdomains by AKAP5 where it can integrate neurotransmitter receptor signals. Part of a complex composed of AKAP5 and ADRB2. Upon AKAP5 binding, the channel is no longer sensitive to intracellular acidification, membrane stretch or arachidonic acid stimuli. Interacts with POPDC1; the interaction enhances KCNK2 surface expression and is inhibited by cAMP. Interacts (via N-terminus) with G-protein subunit GNG4 (via C-terminus); this interaction confers ion selectivity to L-glutamate and Cl(-) anions. Phosphorylation at Ser-348 controls the reversible conversion from a leak channel to a voltage-dependent channel. As to expression, detected in kidney, adrenal gland and brain where it is preferentially expressed in the amygdala but not found in thalamus, hypothalamus, hippocampus or substantia nigra.

The protein localises to the cell membrane. The protein resides in the endoplasmic reticulum membrane. Its subcellular location is the cell projection. It is found in the axon. It localises to the dendrite. The protein localises to the postsynaptic density membrane. The protein resides in the sarcolemma. The enzyme catalyses K(+)(in) = K(+)(out). It carries out the reaction L-glutamate(out) = L-glutamate(in). The catalysed reaction is chloride(in) = chloride(out). It catalyses the reaction Rb(+)(in) = Rb(+)(out). The enzyme catalyses Cs(+)(in) = Cs(+)(out). Its activity is regulated as follows. Activated by various stimuli including intracellular acidic pH, mechanical stretch and polyunsaturated fatty acids such as arachidonic acid. Activated by volatile anesthetics such as chloroform, halothane, and isoflurane. Functionally, k(+) channel that conducts voltage-dependent outward rectifying currents upon membrane depolarization. Voltage sensing is coupled to K(+) electrochemical gradient in an 'ion flux gating' mode where outward but not inward ion flow opens the gate. Converts to voltage-independent 'leak' conductance mode upon stimulation by various stimuli including mechanical membrane stretch, acidic pH, heat and lipids. Reversibly converts between a voltage-insensitive K(+) 'leak' channel and a voltage-dependent outward rectifying K(+) channel in a phosphorylation-dependent manner. Homo- and heterodimerizes to form functional channels with distinct regulatory and gating properties. In trigeminal ganglia sensory neurons, the heterodimer of KCNK2/TREK-1 and KCNK18/TRESK inhibits neuronal firing and neurogenic inflammation by stabilizing the resting membrane potential at K(+) equilibrium potential as well as by regulating the threshold of action potentials and the spike frequency. At trigeminal A-beta afferent nerves, the heterodimer of KCNK2/TREK-1 and KCNK4/TRAAK is mostly coexpressed at nodes of Ranvier where it conducts voltage-independent mechanosensitive and thermosensitive currents, allowing rapid action potential repolarization, high speed and high frequence saltatory conduction on myelinated nerves to ensure prompt sensory responses. In hippocampal astrocytes, the heterodimer of KCNK2/TREK-1 and KCNK1/TWIK-1 allows passive K(+) conductance under basal conditions, but changes ion selectivity and becomes permeable to L-glutamate and Cl(-) ions upon binding to G-protein subunit GNG4 in stimulated astrocytes. Mediates rapid L-glutamate release in response to activation of G-protein-coupled receptors, such as F2R and CNR1. In hippocampal pyramidal neurons, the homodimer of KCNK2/TREK-1 contributes to gamma-aminobutyric acid (GABA) B-induced slow inhibitory postsynaptic potential. Associates with AKAP5 and Gs-protein-coupled receptor B2AR at postsynaptic dense bodies and converts to a leak channel no longer sensitive to stimulation by arachidonic acid, acidic pH or mechanical stress, nor inhibited by Gq-coupled receptors but still under the negative control of Gs-coupled receptors. Permeable to other monovalent cations such as Rb(+) and Cs(+). In terms of biological role, does not display channel activity but reduces the channel activity of isoform 1 and isoform 2 and reduces cell surface expression of isoform 2. This Homo sapiens (Human) protein is Potassium channel subfamily K member 2.